The following is a 265-amino-acid chain: PBSX phage terminase small subunit (265 aa).

Positions 241 to 265 are disordered; sequence KQKAEKTDDSQEPIEIMIKRKERKS.

The protein to B.subtilis YqaS and B.subtilis phage SPP1 terminase small subunit. Dimer of a small and a large subunit.

Functions as a terminase. This chain is PBSX phage terminase small subunit (xtmA), found in Bacillus subtilis (strain 168).